The following is an 81-amino-acid chain: RNA-binding protein KhpA (81 aa).

In terms of domain architecture, KH spans 34–81; that stretch reads KIALRLSVHKSDTGKVIGKQGRTAKAIRTAVFAAGVQSSKKVQFEIFD.

It belongs to the KhpA RNA-binding protein family. In terms of assembly, forms a complex with KhpB.

The protein localises to the cytoplasm. Functionally, a probable RNA chaperone. Forms a complex with KhpB which binds to cellular RNA and controls its expression. Plays a role in peptidoglycan (PG) homeostasis and cell length regulation. This Bacillus subtilis (strain 168) protein is RNA-binding protein KhpA.